Here is a 375-residue protein sequence, read N- to C-terminus: MEEKELKNGYTTGTCATAAVKVALEALIYGKKATEVDITTLNYTNLKIPVQKLRVRNNFASCAIQKYAGDDPDVTNGISICAKVQLVKELPKVDRGAYYDNCVIIGGRGVGFVTKKGLQIAVGKSAINPGPQKMITSVVNEILDGSDEKVIITIYVPEGRAKALKTYNPKMGVIGGISVLGTTGIVKAMSEDALKKSMFAELKVMREDKNRDWIIFAFGNYGERHCQKIGLDTEQLIIISNFVGFMIEAAVKLEFKKIIMLGHIAKAIKVAGGIFNTHSRVADGRMETMAACAFLVDEKPEIIRKILASNTIEEACDYIEKKEIYHLIANRVAFKMQEYARADIEVSAAIFSFKGETIGESDNYQRMVGECGAIK.

This sequence belongs to the CbiD family.

The catalysed reaction is Co-precorrin-5B + S-adenosyl-L-methionine = Co-precorrin-6A + S-adenosyl-L-homocysteine. The protein operates within cofactor biosynthesis; adenosylcobalamin biosynthesis; cob(II)yrinate a,c-diamide from sirohydrochlorin (anaerobic route): step 6/10. Its function is as follows. Catalyzes the methylation of C-1 in cobalt-precorrin-5B to form cobalt-precorrin-6A. This is Cobalt-precorrin-5B C(1)-methyltransferase from Fusobacterium nucleatum subsp. nucleatum (strain ATCC 25586 / DSM 15643 / BCRC 10681 / CIP 101130 / JCM 8532 / KCTC 2640 / LMG 13131 / VPI 4355).